The primary structure comprises 453 residues: Ribosome biogenesis protein SSF2 (453 aa).

Positions methionine 1–histidine 11 are enriched in basic residues. Disordered stretches follow at residues methionine 1–isoleucine 22, lysine 275–lysine 327, and alanine 373–glutamate 453. The region spanning methionine 26–serine 348 is the Brix domain. Residues alanine 373–alanine 398 are compositionally biased toward basic and acidic residues. The span at lysine 399–alanine 409 shows a compositional bias: basic residues. Over residues valine 440–glutamate 453 the composition is skewed to acidic residues.

In terms of assembly, part of a complex that includes BRX1, RPF1, RPF2 and SSF1 or SSF2.

It localises to the nucleus. The protein resides in the nucleolus. Required for biogenesis of the 60S ribosomal subunit. This is Ribosome biogenesis protein SSF2 (SSF2) from Saccharomyces cerevisiae (strain ATCC 204508 / S288c) (Baker's yeast).